Here is a 614-residue protein sequence, read N- to C-terminus: Subtilin transport ATP-binding protein SpaT (614 aa).

Transmembrane regions (helical) follow at residues 34–54, 69–89, 147–167, 175–195, and 267–287; these read FLKL…SLYI, VSIV…SELI, IIQA…SIAF, VSLL…KIGQ, and IAVQ…AFAG. An ABC transmembrane type-1 domain is found at 34 to 320; sequence FLKLIRFSII…IMTSIYSIYN (287 aa). One can recognise an ABC transporter domain in the interval 353–593; sequence VVFQNVSFIY…CPLYKKMDES (241 aa). 387 to 394 provides a ligand contact to ATP; the sequence is GPNGSGKK.

It belongs to the ABC transporter superfamily.

It localises to the cell membrane. In terms of biological role, probably implicated in the export process of the lantibiotic subtilin. The sequence is that of Subtilin transport ATP-binding protein SpaT (spaT) from Bacillus subtilis.